The chain runs to 90 residues: Probable Fe(2+)-trafficking protein (90 aa).

Belongs to the Fe(2+)-trafficking protein family.

Its function is as follows. Could be a mediator in iron transactions between iron acquisition and iron-requiring processes, such as synthesis and/or repair of Fe-S clusters in biosynthetic enzymes. The polypeptide is Probable Fe(2+)-trafficking protein (Pseudomonas aeruginosa (strain UCBPP-PA14)).